Consider the following 260-residue polypeptide: tRNA (guanine-N(7)-)-methyltransferase (260 aa).

Residues 1–37 (MIHDPNDAGLPDQLPTPSSEAENSPAGDTTPPEEALH) are disordered. 4 residues coordinate S-adenosyl-L-methionine: Glu90, Glu115, Asp142, and Asp165. The active site involves Asp165. Substrate-binding positions include Lys169, Asp201, and 236–239 (TKFE).

The protein belongs to the class I-like SAM-binding methyltransferase superfamily. TrmB family.

It carries out the reaction guanosine(46) in tRNA + S-adenosyl-L-methionine = N(7)-methylguanosine(46) in tRNA + S-adenosyl-L-homocysteine. The protein operates within tRNA modification; N(7)-methylguanine-tRNA biosynthesis. Functionally, catalyzes the formation of N(7)-methylguanine at position 46 (m7G46) in tRNA. This Paraburkholderia xenovorans (strain LB400) protein is tRNA (guanine-N(7)-)-methyltransferase.